Here is a 176-residue protein sequence, read N- to C-terminus: Photosystem I assembly protein Ycf4 (176 aa).

Transmembrane regions (helical) follow at residues 22 to 42 (FVWA…GTAS) and 48 to 68 (LIAF…GLFI).

Belongs to the Ycf4 family.

It is found in the plastid thylakoid membrane. Its function is as follows. Seems to be required for the assembly of the photosystem I complex. The sequence is that of Photosystem I assembly protein Ycf4 from Cuscuta gronovii (Common dodder).